The following is a 352-amino-acid chain: C-X-C chemokine receptor type 4 (352 aa).

The tract at residues 1–21 (MEGISIYTSDNYTEEMGSGDY) is important for chemokine binding and signaling. Residues 1–38 (MEGISIYTSDNYTEEMGSGDYDSIKEPCFREENAHFNR) lie on the Extracellular side of the membrane. Tyrosine 7 carries the sulfotyrosine modification. N-linked (GlcNAc...) asparagine glycosylation is present at asparagine 11. Position 12 is a sulfotyrosine (tyrosine 12). Serine 18 carries O-linked (Xyl...) (chondroitin sulfate) serine glycosylation. Tyrosine 21 carries the sulfotyrosine modification. 2 disulfides stabilise this stretch: cysteine 28-cysteine 274 and cysteine 109-cysteine 186. The helical transmembrane segment at 39–63 (IFLPTIYSIIFLTGIVGNGLVILVM) threads the bilayer. The Cytoplasmic segment spans residues 64 to 77 (GYQKKLRSMTDKYR). Residues 78–99 (LHLSVADLLFVITLPFWAVDAV) form a helical membrane-spanning segment. The tract at residues 94 to 97 (WAVD) is chemokine binding. Topologically, residues 100–110 (ANWYFGNFLCK) are extracellular. Residues 111–130 (AVHVIYTVNLYSSVLILAFI) traverse the membrane as a helical segment. The interval 113 to 117 (HVIYT) is chemokine binding. Over 131–154 (SLDRYLAIVHATNSQKPRKLLAEK) the chain is Cytoplasmic. The Important for signaling motif lies at 133-135 (DRY). Positions 135-147 (YLAIVHATNSQKP) are involved in dimerization; when bound to chemokine. Residues 155–174 (VVYVGVWIPALLLTIPDFIF) form a helical membrane-spanning segment. Residues 175 to 195 (ASVSEADDRYICDRFYPNDLW) are Extracellular-facing. The interval 186–190 (CDRFY) is chemokine binding, important for signaling. The involved in dimerization stretch occupies residues 191 to 210 (PNDLWVVVFQFQHIMVGLIL). The helical transmembrane segment at 196 to 216 (VVVFQFQHIMVGLILPGIVIL) threads the bilayer. Over 217–241 (SCYCIIISKLSHSKGHQKGKALKTT) the chain is Cytoplasmic. A helical transmembrane segment spans residues 242–261 (VILILAFFACWLPYYIGISI). The Extracellular portion of the chain corresponds to 262 to 282 (DSFILLEIIKQGCEFENTVHK). The interval 266 to 268 (LLE) is involved in dimerization. Residues 283 to 302 (WISITEALAFFHCCLNPILY) form a helical membrane-spanning segment. The Cytoplasmic segment spans residues 303–352 (AFLGAKFKTSAQHALTSVSRGSSLKILSKGKRGGHSSVSTESESSSFHSS). Phosphoserine is present on residues serine 319 and serine 321. Serine 324 and serine 325 each carry phosphoserine; by PKC and GRK6. Positions 329 to 352 (LSKGKRGGHSSVSTESESSSFHSS) are disordered. Serine 330 carries the phosphoserine; by GRK6 modification. Lysine 331 is covalently cross-linked (Glycyl lysine isopeptide (Lys-Gly) (interchain with G-Cter in ubiquitin)). Positions 337–352 (HSSVSTESESSSFHSS) are enriched in low complexity. Serine 339 is modified (phosphoserine; by GRK6). A phosphoserine mark is found at serine 348 and serine 351.

It belongs to the G-protein coupled receptor 1 family. In terms of assembly, monomer. Can form homodimers. Interacts with CD164. Interacts with ARRB2; the interaction is dependent on the C-terminal phosphorylation of CXCR4 and allows activation of MAPK1 and MAPK3. Interacts with ARR3; the interaction is dependent on the C-terminal phosphorylation of CXCR4 and modulates calcium mobilization. Interacts with RNF113A; the interaction, enhanced by CXCL12, promotes CXCR4 ubiquitination and subsequent degradation. Interacts (via the cytoplasmic C-terminal) with ITCH (via the WW domains I and II); the interaction, enhanced by CXCL12, promotes CXCR4 ubiquitination and leads to its degradation. Interacts with extracellular ubiquitin. Interacts with DBN1; this interaction is enhanced by antigenic stimulation. Following LPS binding, may form a complex with GDF5, HSP90AA1 and HSPA8. Phosphorylated on agonist stimulation. Rapidly phosphorylated on serine and threonine residues in the C-terminal. Phosphorylation at Ser-324 and Ser-325 leads to recruitment of ITCH, ubiquitination and protein degradation. Post-translationally, ubiquitinated after ligand binding, leading to its degradation. Ubiquitinated by ITCH at the cell membrane on agonist stimulation. The ubiquitin-dependent mechanism, endosomal sorting complex required for transport (ESCRT), then targets CXCR4 for lysosomal degradation. This process is dependent also on prior Ser-/Thr-phosphorylation in the C-terminal of CXCR4. Also binding of ARRB1 to STAM negatively regulates CXCR4 sorting to lysosomes though modulating ubiquitination of SFR5S. In terms of processing, sulfation is required for efficient binding of CXCL12/SDF-1alpha and promotes its dimerization. O- and N-glycosylated. N-glycosylation can mask coreceptor function. The O-glycosylation chondroitin sulfate attachment does not affect interaction with CXCL12/SDF-1alpha nor its coreceptor activity.

It is found in the cell membrane. The protein resides in the cell junction. Its subcellular location is the early endosome. It localises to the late endosome. The protein localises to the lysosome. Functionally, receptor for the C-X-C chemokine CXCL12/SDF-1 that transduces a signal by increasing intracellular calcium ion levels and enhancing MAPK1/MAPK3 activation. Involved in the AKT signaling cascade. Plays a role in regulation of cell migration, e.g. during wound healing. Acts as a receptor for extracellular ubiquitin; leading to enhanced intracellular calcium ions and reduced cellular cAMP levels. Binds bacterial lipopolysaccharide (LPS) et mediates LPS-induced inflammatory response, including TNF secretion by monocytes. Involved in hematopoiesis and in cardiac ventricular septum formation. Also plays an essential role in vascularization of the gastrointestinal tract, probably by regulating vascular branching and/or remodeling processes in endothelial cells. Involved in cerebellar development. In the CNS, could mediate hippocampal-neuron survival. This Chlorocebus aethiops (Green monkey) protein is C-X-C chemokine receptor type 4 (CXCR4).